A 340-amino-acid chain; its full sequence is Phosphoribosylformylglycinamidine cyclo-ligase (340 aa).

This sequence belongs to the AIR synthase family.

The protein localises to the cytoplasm. The enzyme catalyses 2-formamido-N(1)-(5-O-phospho-beta-D-ribosyl)acetamidine + ATP = 5-amino-1-(5-phospho-beta-D-ribosyl)imidazole + ADP + phosphate + H(+). It functions in the pathway purine metabolism; IMP biosynthesis via de novo pathway; 5-amino-1-(5-phospho-D-ribosyl)imidazole from N(2)-formyl-N(1)-(5-phospho-D-ribosyl)glycinamide: step 2/2. The sequence is that of Phosphoribosylformylglycinamidine cyclo-ligase from Lactococcus lactis subsp. cremoris (strain MG1363).